Consider the following 261-residue polypeptide: Orotidine 5'-phosphate decarboxylase (261 aa).

Substrate-binding positions include Asp-34, 56-58 (KTH), 88-97 (DRKFADIGNT), Tyr-214, and Arg-232. Lys-90 (proton donor) is an active-site residue.

Belongs to the OMP decarboxylase family.

The enzyme catalyses orotidine 5'-phosphate + H(+) = UMP + CO2. Its pathway is pyrimidine metabolism; UMP biosynthesis via de novo pathway; UMP from orotate: step 2/2. In Kodamaea ohmeri (Yeast), this protein is Orotidine 5'-phosphate decarboxylase (URA3).